We begin with the raw amino-acid sequence, 518 residues long: AarF domain-containing kinase 1 (518 aa).

One can recognise a Protein kinase domain in the interval 149 to 468; the sequence is SFEREPLGTA…SKCCVQSSYA (320 aa). Residues 155 to 163 and lysine 177 contribute to the ATP site; that span reads LGTASLAQV. Aspartate 309 functions as the Proton acceptor in the catalytic mechanism.

This sequence belongs to the protein kinase superfamily. ADCK protein kinase family.

It localises to the mitochondrion. Its function is as follows. Essential for maintaining mitochondrial cristae formation and mitochondrial function by acting via YME1L to regulate the mitochondrial structural proteins Opa1 and Mitofilin. This function is likely to be kinase-independent. Functions in tracheal development and larval molting probably by acting in sterol modification and/or intracellular lipid trafficking. The action of this enzyme is not yet clear. It is not known if it has protein kinase activity and what type of substrate it would phosphorylate (Ser, Thr or Tyr). The sequence is that of AarF domain-containing kinase 1 from Drosophila melanogaster (Fruit fly).